The following is a 561-amino-acid chain: Urocanate hydratase (561 aa).

NAD(+)-binding positions include 52–53, glutamine 130, 176–178, glutamate 196, arginine 201, 242–243, 267–271, 277–278, and tyrosine 326; these read GG, GMG, NA, QTSAH, and YL. The active site involves cysteine 414. An NAD(+)-binding site is contributed by glycine 496.

Belongs to the urocanase family. The cofactor is NAD(+).

The protein localises to the cytoplasm. The catalysed reaction is 4-imidazolone-5-propanoate = trans-urocanate + H2O. Its pathway is amino-acid degradation; L-histidine degradation into L-glutamate; N-formimidoyl-L-glutamate from L-histidine: step 2/3. In terms of biological role, catalyzes the conversion of urocanate to 4-imidazolone-5-propionate. The polypeptide is Urocanate hydratase (Rhizobium rhizogenes (strain K84 / ATCC BAA-868) (Agrobacterium radiobacter)).